The chain runs to 432 residues: 3-phosphoshikimate 1-carboxyvinyltransferase (432 aa).

3-phosphoshikimate-binding residues include K23, S24, and R28. K23 contacts phosphoenolpyruvate. Phosphoenolpyruvate contacts are provided by G96 and R125. Positions 170, 172, 318, and 345 each coordinate 3-phosphoshikimate. Phosphoenolpyruvate is bound at residue Q172. The active-site Proton acceptor is the D318. 2 residues coordinate phosphoenolpyruvate: R349 and R391.

This sequence belongs to the EPSP synthase family. In terms of assembly, monomer.

The protein resides in the cytoplasm. It catalyses the reaction 3-phosphoshikimate + phosphoenolpyruvate = 5-O-(1-carboxyvinyl)-3-phosphoshikimate + phosphate. Its pathway is metabolic intermediate biosynthesis; chorismate biosynthesis; chorismate from D-erythrose 4-phosphate and phosphoenolpyruvate: step 6/7. Functionally, catalyzes the transfer of the enolpyruvyl moiety of phosphoenolpyruvate (PEP) to the 5-hydroxyl of shikimate-3-phosphate (S3P) to produce enolpyruvyl shikimate-3-phosphate and inorganic phosphate. In Gloeobacter violaceus (strain ATCC 29082 / PCC 7421), this protein is 3-phosphoshikimate 1-carboxyvinyltransferase.